A 922-amino-acid chain; its full sequence is Autophagy-related protein 9B (922 aa).

Disordered stretches follow at residues 1-22 and 85-144; these read MVRR…DLGP and TPHN…MGPL. At 1 to 206 the chain is on the cytoplasmic side; that stretch reads MVRRTGWGGS…KIYSYHQRNG (206 aa). The span at 85-114 shows a compositional bias: polar residues; the sequence is TPHNVLPTPTTPSTQAHPTMIHTSASPSWG. Low complexity predominate over residues 115-124; that stretch reads SHSTPPLASA. The short motif at 150 to 153 is the Tyrosine-based sorting signal element; that stretch reads YERL. The helical transmembrane segment at 207 to 227 threads the bilayer; the sequence is FACILLEDVFQLGQFIFIVTF. The Lumenal segment spans residues 228-275; it reads TTFLLRCVDYNVLFNNQPKNHTRRGPLHSKVTLSDAILPSAQCAEKIH. Residues 276–296 traverse the membrane as a helical segment; that stretch reads DSPLLVFLLVLAAGFWLFQLL. The Cytoplasmic segment spans residues 297–437; the sequence is RSVCNLFSYW…GVLANRWRRT (141 aa). The stretch at 438 to 458 is an intramembrane region; sequence VLLLAAVNLALSPLVLAWQVL. The Cytoplasmic portion of the chain corresponds to 459–523; that stretch reads HAFYSHVELL…RAAEPPAPLR (65 aa). Residues 524–544 form a helical membrane-spanning segment; the sequence is ALLARQLVFFSGALFAALLVL. Topologically, residues 545–550 are lumenal; sequence TIYDED. The chain crosses the membrane as a helical span at residues 551–571; it reads VLAVEHVLTTMTALGVTATVA. Over 572-624 the chain is Cytoplasmic; sequence RSFIPEEQCQGRSSQLLLQAALAHMHYLPEEPGATGARASSYWQMAQLLQYRA. Residues 625 to 645 lie within the membrane without spanning it; the sequence is VSLLEELLSPLLTPLFLLFWF. Over 646–922 the chain is Cytoplasmic; that stretch reads RPRALEIIDF…QKEPLTGPLH (277 aa). Residues 848–922 form a disordered region; sequence ELWGEASASS…QKEPLTGPLH (75 aa). Low complexity-rich tracts occupy residues 854–870 and 877–889; these read SASS…QPGS and SWSS…ASSP. The span at 890–899 shows a compositional bias: polar residues; sequence RQQWGTQRAQ.

This sequence belongs to the ATG9 family. As to quaternary structure, homotrimer; forms a homotrimer with a central pore that forms a path between the two membrane leaflets. In terms of tissue distribution, expressed in heart, brain, and placenta and testis.

It localises to the preautophagosomal structure membrane. The enzyme catalyses a 1,2-diacyl-sn-glycero-3-phosphocholine(in) = a 1,2-diacyl-sn-glycero-3-phosphocholine(out). It catalyses the reaction a 1,2-diacyl-sn-glycero-3-phospho-L-serine(in) = a 1,2-diacyl-sn-glycero-3-phospho-L-serine(out). The catalysed reaction is a 1,2-diacyl-sn-glycero-3-phosphoethanolamine(in) = a 1,2-diacyl-sn-glycero-3-phosphoethanolamine(out). In terms of biological role, phospholipid scramblase involved in autophagy by mediating autophagosomal membrane expansion. Cycles between the preautophagosomal structure/phagophore assembly site (PAS) and the cytoplasmic vesicle pool and supplies membrane for the growing autophagosome. Lipid scramblase activity plays a key role in preautophagosomal structure/phagophore assembly by distributing the phospholipids that arrive through ATG2 (ATG2A or ATG2B) from the cytoplasmic to the luminal leaflet of the bilayer, thereby driving autophagosomal membrane expansion. In addition to autophagy, also plays a role in necrotic cell death. The chain is Autophagy-related protein 9B from Mus musculus (Mouse).